Here is a 104-residue protein sequence, read N- to C-terminus: N(4)-acetylcytidine amidohydrolase (104 aa).

In terms of domain architecture, ASCH spans 7-104 (TFFTRFEQDI…FWVIAFELVD (98 aa)). K21 serves as the catalytic Proton acceptor. T24 functions as the Nucleophile in the catalytic mechanism. E74 serves as the catalytic Proton donor.

It belongs to the N(4)-acetylcytidine amidohydrolase family.

The enzyme catalyses N(4)-acetylcytidine + H2O = cytidine + acetate + H(+). It catalyses the reaction N(4)-acetyl-2'-deoxycytidine + H2O = 2'-deoxycytidine + acetate + H(+). The catalysed reaction is N(4)-acetylcytosine + H2O = cytosine + acetate + H(+). In terms of biological role, catalyzes the hydrolysis of N(4)-acetylcytidine (ac4C). The sequence is that of N(4)-acetylcytidine amidohydrolase from Pasteurella multocida (strain Pm70).